The following is a 252-amino-acid chain: 2,5-diamino-6-ribosylamino-4(3H)-pyrimidinone 5'-phosphate reductase (252 aa).

Residues Thr80, Asp84, Val166, and 189–193 (GGIVI) contribute to the NADP(+) site.

This sequence belongs to the HTP reductase family. In terms of assembly, homodimer.

It carries out the reaction 2,5-diamino-6-(1-D-ribitylamino)pyrimidin-4(3H)-one 5'-phosphate + NADP(+) = 2,5-diamino-6-(1-D-ribosylamino)pyrimidin-4(3H)-one 5'-phosphate + NADPH + H(+). The catalysed reaction is 2,5-diamino-6-(1-D-ribitylamino)pyrimidin-4(3H)-one 5'-phosphate + NAD(+) = 2,5-diamino-6-(1-D-ribosylamino)pyrimidin-4(3H)-one 5'-phosphate + NADH + H(+). It functions in the pathway cofactor biosynthesis; riboflavin biosynthesis. Its function is as follows. Catalyzes an early step in riboflavin biosynthesis, the NADPH-dependent reduction of the ribose side chain of 2,5-diamino-6-ribosylamino-4(3H)-pyrimidinone 5'-phosphate, yielding 2,5-diamino-6-ribitylamino-4(3H)-pyrimidinone 5'-phosphate. In Kluyveromyces lactis (strain ATCC 8585 / CBS 2359 / DSM 70799 / NBRC 1267 / NRRL Y-1140 / WM37) (Yeast), this protein is 2,5-diamino-6-ribosylamino-4(3H)-pyrimidinone 5'-phosphate reductase (RIB7).